A 215-amino-acid polypeptide reads, in one-letter code: Ribonuclease HII (215 aa).

Positions 19–213 (QTVAGVDEVG…SLRQPSQQID (195 aa)) constitute an RNase H type-2 domain. Residues Asp-25, Glu-26, and Asp-121 each contribute to the a divalent metal cation site.

Belongs to the RNase HII family. Mn(2+) serves as cofactor. The cofactor is Mg(2+).

It is found in the cytoplasm. It carries out the reaction Endonucleolytic cleavage to 5'-phosphomonoester.. In terms of biological role, endonuclease that specifically degrades the RNA of RNA-DNA hybrids. The sequence is that of Ribonuclease HII from Synechococcus elongatus (strain ATCC 33912 / PCC 7942 / FACHB-805) (Anacystis nidulans R2).